A 299-amino-acid chain; its full sequence is uncharacterized protein (299 aa).

This is an uncharacterized protein from Mycobacterium tuberculosis (strain ATCC 25618 / H37Rv).